The sequence spans 189 residues: UPF0301 protein CF0373 (189 aa).

It belongs to the UPF0301 (AlgH) family.

In Chlamydia felis (strain Fe/C-56) (Chlamydophila felis), this protein is UPF0301 protein CF0373.